Here is a 674-residue protein sequence, read N- to C-terminus: RNA polymerase sigma factor RpoD (674 aa).

Positions 214–252 (AEGAAPAARRPASDEPEYDADGNPISRIDEEEDDDDSSN) are disordered. Positions 440 to 510 (MVEANLRLVI…TRSIADQART (71 aa)) are sigma-70 factor domain-2. The Interaction with polymerase core subunit RpoC motif lies at 464 to 467 (DLIQ). Residues 519–595 (ETINKLVRTG…DKNAILPLDS (77 aa)) are sigma-70 factor domain-3. Positions 608-661 (VLASLTPREERVLRMRFGIGMNTDHTLEEVGQQFSVTRERIRQIEAKALRKLKH) are sigma-70 factor domain-4. Residues 634–653 (LEEVGQQFSVTRERIRQIEA) constitute a DNA-binding region (H-T-H motif).

This sequence belongs to the sigma-70 factor family. RpoD/SigA subfamily. As to quaternary structure, interacts transiently with the RNA polymerase catalytic core.

Its subcellular location is the cytoplasm. Its function is as follows. Sigma factors are initiation factors that promote the attachment of RNA polymerase to specific initiation sites and are then released. This sigma factor is the primary sigma factor during exponential growth. The sequence is that of RNA polymerase sigma factor RpoD from Rhodobacter capsulatus (strain ATCC BAA-309 / NBRC 16581 / SB1003).